The primary structure comprises 62 residues: Double zinc ribbon protein TK0111 (62 aa).

Zn(2+)-binding residues include C13, C16, C31, C34, C42, C45, C54, and C57.

In terms of assembly, crystallized in association with 70S ribosomes. The cofactor is Zn(2+).

The sequence is that of Double zinc ribbon protein TK0111 from Thermococcus kodakarensis (strain ATCC BAA-918 / JCM 12380 / KOD1) (Pyrococcus kodakaraensis (strain KOD1)).